Here is a 262-residue protein sequence, read N- to C-terminus: Acyl-[acyl-carrier-protein]--UDP-N-acetylglucosamine O-acyltransferase (262 aa).

The protein belongs to the transferase hexapeptide repeat family. LpxA subfamily. As to quaternary structure, homotrimer.

The protein localises to the cytoplasm. The catalysed reaction is a (3R)-hydroxyacyl-[ACP] + UDP-N-acetyl-alpha-D-glucosamine = a UDP-3-O-[(3R)-3-hydroxyacyl]-N-acetyl-alpha-D-glucosamine + holo-[ACP]. It participates in glycolipid biosynthesis; lipid IV(A) biosynthesis; lipid IV(A) from (3R)-3-hydroxytetradecanoyl-[acyl-carrier-protein] and UDP-N-acetyl-alpha-D-glucosamine: step 1/6. Functionally, involved in the biosynthesis of lipid A, a phosphorylated glycolipid that anchors the lipopolysaccharide to the outer membrane of the cell. The sequence is that of Acyl-[acyl-carrier-protein]--UDP-N-acetylglucosamine O-acyltransferase from Pectobacterium atrosepticum (strain SCRI 1043 / ATCC BAA-672) (Erwinia carotovora subsp. atroseptica).